The sequence spans 1142 residues: Melanoma-associated antigen C1 (1142 aa).

The interval 1–132 is disordered; sequence MGDKDMPTAG…DVQSPLQNPA (132 aa). Residues 13 to 42 are compositionally biased toward low complexity; that stretch reads SLLQSSSESPQSCPEGEDSQSPLQIPQSSP. Ser-63 is modified (phosphoserine). Over residues 76–87 the composition is skewed to low complexity; sequence SQSPLQIPQSSP. The segment covering 92-103 has biased composition (polar residues); the sequence is TQSPLQNSQSSP. Phosphoserine is present on residues Ser-207 and Ser-382. 2 disordered regions span residues 502-778 and 791-893; these read TQST…LQRP and LQSS…SLTD. Polar residues predominate over residues 614–626; that stretch reads SPLQGEEFQSSLQ. The segment covering 627 to 659 has biased composition (low complexity); it reads SPVSICSSSTPSSLPQSFPESSQSPPEGPVQSP. Over residues 671–680 the composition is skewed to polar residues; sequence HSQSPLQSPE. 2 stretches are compositionally biased toward low complexity: residues 741 to 762 and 807 to 889; these read QSPV…FPES and QSPL…LESD. The 199-residue stretch at 908–1106 folds into the MAGE domain; it reads LDEKVDELAR…ITFPSSYKDA (199 aa). Ser-1063 is subject to Phosphoserine. The segment at 1118 to 1142 is disordered; it reads IDTTDDSTATESASSSVMSPSFSSE. Residues 1123–1142 show a composition bias toward low complexity; sequence DSTATESASSSVMSPSFSSE.

Expressed in testis and in tumors of a wide variety of histologic types.

It localises to the cytoplasm. The sequence is that of Melanoma-associated antigen C1 (MAGEC1) from Homo sapiens (Human).